The sequence spans 631 residues: Chaperone protein DnaK (631 aa).

Thr-197 is modified (phosphothreonine; by autocatalysis). The disordered stretch occupies residues 600-631 (KKENPQAADAQQGNTANAGKKKDDDVIDAEVE).

The protein belongs to the heat shock protein 70 family.

In terms of biological role, acts as a chaperone. The protein is Chaperone protein DnaK of Wolinella succinogenes (strain ATCC 29543 / DSM 1740 / CCUG 13145 / JCM 31913 / LMG 7466 / NCTC 11488 / FDC 602W) (Vibrio succinogenes).